Reading from the N-terminus, the 855-residue chain is MTDLSQHTPMMQQYFKLKHQHPDQLMFYRMGDFYELFYEDAKKAAKLLDITLTARGQSGGKAIPMAGIPFHSAEGYLAKLVKLGESVAICEQIGDPATSKGPVERQVVRIITPGTVSDEALLDERRDNLLAAILGDERLFGLAVLDITSGRFSVQEIKGWETLLAELERLNPAELLIPDDWPQGLPAEKRRGVRRRAPWDFDRDSAHKSLCQQFGTQDLKGFGCQNLTLAIGAAGCLLAYAKETQRTALPHLRSLRHDRLDDTVILDGASRRNLELDINLSGGRENTLQSVVDRCQTAMASRLMSRWLNRPLRDRAVLEARQESIACLLERYRFENLQPQLKEIGDLERILARIGLRNARPRDLARLRDALAALPDLQNAMTELEAPHLQALATTIGTYPELAELLAKAIIDNPPAVIRDGGVIKTGYDAELDELQALSENAGQFLMDLEAREKARTGLPNLKVGYNRIHGYFIELPRVQAEQAPADYIRRQTLKGAERFITPELKAFEDKALSAQSRALAREKALYEELLERLIGHLAPLQDSASALAELDVLANLAERALNLDLNRPRFVEHTCLHIEQGRHPVVEQVLETPFVANDLALDADTRMLVITGPNMGGKSTYMRQTALIVLLAHIGSFVPAARCELSLVDRIFTRIGSSDDLAGGRSTFMVEMSETANILHNATDKSLVLMDEVGRGTSTFDGLSLAWAAAEDLARTRAFTLFATHYFELTVLPESQPAVANVHLNATEHNERIVFLHHVLPGPASQSYGLAVAQLAGVPAPVIQRAREHLKRLETTSLPHEMPSQQSGKPASPMQSDLFASLPHPVIDELSRINPDDISPRQALDLLYAWKMRV.

613–620 (GPNMGGKS) provides a ligand contact to ATP. The disordered stretch occupies residues 796–816 (TTSLPHEMPSQQSGKPASPMQ).

It belongs to the DNA mismatch repair MutS family.

Its function is as follows. This protein is involved in the repair of mismatches in DNA. It is possible that it carries out the mismatch recognition step. This protein has a weak ATPase activity. The protein is DNA mismatch repair protein MutS of Pseudomonas aeruginosa (strain ATCC 15692 / DSM 22644 / CIP 104116 / JCM 14847 / LMG 12228 / 1C / PRS 101 / PAO1).